Here is a 196-residue protein sequence, read N- to C-terminus: ECF RNA polymerase sigma factor SigM (196 aa).

Positions 39–105 are sigma-70 factor domain-2; the sequence is LFRRHHRQLH…ACLDRLRRAK (67 aa). Positions 63–66 match the Interaction with polymerase core subunit RpoC motif; the sequence is DALQ. The sigma-70 factor domain-4 stretch occupies residues 130 to 181; sequence AVQRALMRLPVEQRAAVVAVDMQGYSIADTARMLGVAEGTVKSRCARARARL. Positions 156 to 175 form a DNA-binding region, H-T-H motif; sequence IADTARMLGVAEGTVKSRCA.

Belongs to the sigma-70 factor family. ECF subfamily. In terms of assembly, interacts transiently with the RNA polymerase catalytic core formed by RpoA, RpoB, RpoC and RpoZ (2 alpha, 1 beta, 1 beta' and 1 omega subunit) to form the RNA polymerase holoenzyme that can initiate transcription. Interacts (via sigma-70 factor domain 4) with anti-sigma-M factor RsmA.

Its function is as follows. Sigma factors are initiation factors that promote the attachment of RNA polymerase to specific initiation sites and are then released. Extracytoplasmic function (ECF) sigma factors are held in an inactive form by an anti-sigma factor until released by regulated intramembrane proteolysis. The protein is ECF RNA polymerase sigma factor SigM (sigM) of Mycobacterium tuberculosis (strain ATCC 35801 / TMC 107 / Erdman).